A 204-amino-acid polypeptide reads, in one-letter code: 3,4-dihydroxy-2-butanone 4-phosphate synthase (204 aa).

Glu-27 serves as a coordination point for Mg(2+). Asp-31 lines the D-ribulose 5-phosphate pocket. Cys-56 is subject to S-glutathionyl cysteine. D-ribulose 5-phosphate-binding positions include Thr-82 and 140-144; that span reads RDGHT. His-143 lines the Mg(2+) pocket.

Belongs to the DHBP synthase family. In terms of assembly, homodimer. Requires Mg(2+) as cofactor. Mn(2+) is required as a cofactor. S-glutathionylation is reversible and dependent on a glutaredoxin.

The catalysed reaction is D-ribulose 5-phosphate = (2S)-2-hydroxy-3-oxobutyl phosphate + formate + H(+). It functions in the pathway cofactor biosynthesis; riboflavin biosynthesis; 2-hydroxy-3-oxobutyl phosphate from D-ribulose 5-phosphate: step 1/1. Functionally, catalyzes the conversion of D-ribulose 5-phosphate to formate and 3,4-dihydroxy-2-butanone 4-phosphate. The polypeptide is 3,4-dihydroxy-2-butanone 4-phosphate synthase (Schizosaccharomyces pombe (strain 972 / ATCC 24843) (Fission yeast)).